The chain runs to 728 residues: Nucleolar GTP-binding protein 2 (728 aa).

At Met-1 the chain carries N-acetylmethionine. Residues 1-33 (MVKPKYKGRSTINRSAASTNPDRVQGAGGQNMR) form a disordered region. Residues 10-22 (STINRSAASTNPD) show a composition bias toward polar residues. In terms of domain architecture, CP-type G spans 207–368 (WGELYKVIDS…LIDCPGVVYP (162 aa)). Residues 317-324 (GYPNVGKS) and 361-365 (DCPGV) contribute to the GTP site. Disordered stretches follow at residues 462–521 (PPNA…RNSE), 538–595 (VGPQ…DTKA), and 636–728 (YKEE…RQKQ). The span at 480-489 (EVPTETTQNN) shows a compositional bias: low complexity. Basic and acidic residues predominate over residues 498–520 (EVERSDSITEKEPEGDCSQDRNS). At Ser-504 the chain carries Phosphoserine. Residues 553-586 (SDLEDLESSGEEEEQEQEQPGEDAEEERSPDTQE) show a composition bias toward acidic residues. Basic residues predominate over residues 718-728 (KHRRNKFRQKQ).

This sequence belongs to the TRAFAC class YlqF/YawG GTPase family. NOG2 subfamily. In terms of assembly, interacts with LYAR and RPL23A. Interacts with the nuclear importin-beta receptor and, at a lower extent, with importin-alpha.

The protein localises to the nucleus. It is found in the nucleolus. GTPase that associates with pre-60S ribosomal subunits in the nucleolus and is required for their nuclear export and maturation. May promote cell proliferation possibly by increasing p53/TP53 protein levels, and consequently those of its downstream product CDKN1A/p21, and decreasing RPL23A protein levels. This is Nucleolar GTP-binding protein 2 (Gnl2) from Mus musculus (Mouse).